The chain runs to 566 residues: O-fucosyltransferase 36 (566 aa).

Residues 1-14 (MERNSSDDEEDHQH) show a composition bias toward basic and acidic residues. The tract at residues 1 to 37 (MERNSSDDEEDHQHLIPQNDTRIRHREDSVSSNATTI) is disordered. Residues 66 to 86 (YVIVFVSLIISIGLLFLLTDP) traverse the membrane as a helical; Signal-anchor for type II membrane protein segment. 5 N-linked (GlcNAc...) asparagine glycosylation sites follow: asparagine 93, asparagine 129, asparagine 138, asparagine 179, and asparagine 190. Substrate contacts are provided by residues 415 to 417 (HFR) and 531 to 532 (TF).

The protein belongs to the glycosyltransferase GT106 family.

It is found in the membrane. It participates in glycan metabolism. The sequence is that of O-fucosyltransferase 36 from Arabidopsis thaliana (Mouse-ear cress).